The following is a 773-amino-acid chain: Beta-hexosaminidase B (773 aa).

An N-terminal signal peptide occupies residues 1-19; the sequence is MKFNRLMALLFGVSSPLYA. 3 cysteine pairs are disulfide-bonded: Cys-46–Cys-53, Cys-389–Cys-397, and Cys-496–Cys-542. The active-site Proton donor is Glu-531.

This sequence belongs to the glycosyl hydrolase 20 family.

The enzyme catalyses Hydrolysis of terminal non-reducing N-acetyl-D-hexosamine residues in N-acetyl-beta-D-hexosaminides.. This chain is Beta-hexosaminidase B (nag096), found in Pseudoalteromonas piscicida.